Reading from the N-terminus, the 354-residue chain is Carbonic anhydrase 12 (354 aa).

The N-terminal stretch at 1 to 24 (MPHRSLRATVVLLLVILKKQPSSS) is a signal peptide. Residues 25-301 (APLNGSKWTY…QGLLTDTGLS (277 aa)) lie on the Extracellular side of the membrane. Residues asparagine 28, asparagine 42, asparagine 80, and asparagine 88 are each glycosylated (N-linked (GlcNAc...) asparagine). One can recognise an Alpha-carbonic anhydrase domain in the interval 30–290 (SKWTYVGPAG…FDERLVYISF (261 aa)). Cysteine 50 and cysteine 231 are disulfide-bonded. The active-site Proton donor/acceptor is the histidine 94. 3 residues coordinate Zn(2+): histidine 120, histidine 122, and histidine 146. 227–228 (TT) lines the substrate pocket. Residues 302-322 (LGIILSVALAGVLGISIVLAV) form a helical membrane-spanning segment. Residues 323-354 (SIWLFKRKKSKKGDNKGVIYKPAIKKEAEVHA) are Cytoplasmic-facing.

This sequence belongs to the alpha-carbonic anhydrase family. In terms of assembly, homodimer. Zn(2+) is required as a cofactor.

It is found in the membrane. The protein localises to the cell membrane. The catalysed reaction is hydrogencarbonate + H(+) = CO2 + H2O. Inhibited by acetazolamide. Functionally, reversible hydration of carbon dioxide. This chain is Carbonic anhydrase 12, found in Mus musculus (Mouse).